The sequence spans 516 residues: Melianol synthase CYP71BQ17 (516 aa).

Residues 14 to 34 (MPHLPSLPVSLSFLLFFLMLV) traverse the membrane as a helical segment. Heme is bound at residue Cys-454.

It belongs to the cytochrome P450 family. Heme serves as cofactor. As to expression, mainly expressed in roots and, to a lesser extent, in stems and old leaves.

Its subcellular location is the membrane. The enzyme catalyses dihydroniloticin + 2 reduced [NADPH--hemoprotein reductase] + 2 O2 = melianol + 2 oxidized [NADPH--hemoprotein reductase] + 3 H2O + 2 H(+). It participates in secondary metabolite biosynthesis; terpenoid biosynthesis. Functionally, monooxygenase involved in the biosynthesis of quassinoids triterpene natural products such as ailanthone, chaparrinone, glaucarubinone and amarolide, allelopathic degraded triterpene lactones inhibiting the growth of other plants, and possessing antimalarial, antifeedant, insecticidal, anti-inflammatory and anticancer activities. Catalyzes the conversion of dihydroniloticin to the protolimonoid melianol. This chain is Melianol synthase CYP71BQ17, found in Ailanthus altissima (Tree-of-heaven).